The following is a 109-amino-acid chain: Cell division protein ZapA (109 aa).

The stretch at 21–97 (PDQRDALNQA…QTIEQALLDQ (77 aa)) forms a coiled coil.

Belongs to the ZapA family. Type 1 subfamily. Homodimer. Interacts with FtsZ.

Its subcellular location is the cytoplasm. Activator of cell division through the inhibition of FtsZ GTPase activity, therefore promoting FtsZ assembly into bundles of protofilaments necessary for the formation of the division Z ring. It is recruited early at mid-cell but it is not essential for cell division. The polypeptide is Cell division protein ZapA (Salmonella agona (strain SL483)).